We begin with the raw amino-acid sequence, 122 residues long: Small ribosomal subunit protein bS16 (122 aa).

Residues 81-122 are disordered; it reads GLMKRDAKNNPKKGEPGEKAKERAKERAEKAAAGSTEDAAAE. Residues 83 to 110 show a composition bias toward basic and acidic residues; it reads MKRDAKNNPKKGEPGEKAKERAKERAEK. Residues 111 to 122 are compositionally biased toward low complexity; the sequence is AAAGSTEDAAAE.

Belongs to the bacterial ribosomal protein bS16 family.

The chain is Small ribosomal subunit protein bS16 from Xanthobacter autotrophicus (strain ATCC BAA-1158 / Py2).